A 384-amino-acid chain; its full sequence is Odorant receptor 33c (384 aa).

The Cytoplasmic segment spans residues 1–35 (MVIIDSLSFYRPFWICMRLLVPTFFKDSSRPVQLY). Residues 36–56 (VVLLHILVTLWFPLHLLLHLL) form a helical membrane-spanning segment. Topologically, residues 57-63 (LLPSTAE) are extracellular. The chain crosses the membrane as a helical span at residues 64–84 (FFKNLTMSLTCVACSLKHVAH). At 85–128 (LYHLPQIVEIESLIEQLDTFIASEQEHRYYRDHVHCHARRFTRC) the chain is on the cytoplasmic side. The helical transmembrane segment at 129-149 (LYISFGMIYALFLFGVFVQVI) threads the bilayer. At 150 to 169 (SGNWELLYPAYFPFDLESNR) the chain is on the extracellular side. A helical transmembrane segment spans residues 170–190 (FLGAVALGYQVFSMLVEGFQG). The Cytoplasmic portion of the chain corresponds to 191-251 (LGNDTYTPLT…LVRFHNLVSR (61 aa)). A helical membrane pass occupies residues 252–272 (TISEVQLVQLGGCGATLCIIV). Residues 273 to 274 (SY) are Extracellular-facing. The chain crosses the membrane as a helical span at residues 275 to 295 (MLFFVGDTISLVYYLVFFGVV). Topologically, residues 296 to 358 (CVQLFPSCYF…WIIKAGGLIE (63 aa)) are cytoplasmic. The helical transmembrane segment at 359–379 (LNLNAFFATLKMAYSLFAVVV) threads the bilayer. At 380–384 (RAKGI) the chain is on the extracellular side.

It belongs to the insect chemoreceptor superfamily. Heteromeric odorant receptor channel (TC 1.A.69) family. Or2a subfamily. In terms of assembly, interacts with Orco. Complexes exist early in the endomembrane system in olfactory sensory neurons (OSNs), coupling these complexes to the conserved ciliary trafficking pathway. As to expression, expressed in the antenna and in a subset of 18 olfactory receptor neurons in the maxillary palp.

It is found in the cell membrane. Functionally, odorant receptor which mediates acceptance or avoidance behavior, depending on its substrates. The odorant receptor repertoire encodes a large collection of odor stimuli that vary widely in identity, intensity, and duration. May form a complex with Orco to form odorant-sensing units, providing sensitive and prolonged odorant signaling and calcium permeability. The polypeptide is Odorant receptor 33c (Or33c) (Drosophila melanogaster (Fruit fly)).